The following is a 1168-amino-acid chain: MFLVYLRNCMDFFFNSSFNYSLTSIDFYKTIFLIFANKIKNNFLYIISFQWFFNITYIINQLPSIDDELYIPIVRDFFNFNSLITYIYNISLTQIFSIFSFSAIHVYFIKRLYSENLTSILPALSGYFISEILFIICIYSGITNLFIILANWERFFIISGIIFFFYEGVNFIKENKNKNIYLKIPFIKHSTFFNSYRFFNFKEFFLGVFLFCLDSPSIFTLVSNLSLTPTVSNFEFFINSSFIQLVLFILIRSFFFYLSFIIIYPFILNKIHHNTYFQSDTLKKINIFIQKGFGMLLIFFSVSSIPFYTIEYFLGYLLGIIPKDISLFFTQLDPYFLSDSPGFYEQFYYGNTVVPFKAAKFDRGRYLLYPAYRELPPSYEDFIFKPIYLEWTKTLKSNNYIDRYLGSQKTTMQYIQTKATPIIKFFENLFPDANVRKSNKRKKILTQLLTDKFLGSHTKLNTYFNVPYAEKLLFFNRLSKSAFRINNKQYYNDLILSSIEEFVTFNENLIPNFETLTPFDKCTYRFSLSKNLLTSRLKPFVDFLDLFSAPEFDITPIYVKMAENILSTYDRKKFFAPLANFFKDETLNESKVKKKNAQPSLSREIEAIQGKIPLESILTEGIVALFPEWAYIKMELVGKLGSIIKEYQRYFNFLEIFNLYLRGHSFKLTVKQSIDLHYRQLYQTEAISYLRHYFNNNSYRKIRDDLDNFSKVLKINFIENTKNKTNKIKNLNTREDSKKLLISLEKDSKKFMKYLLFKTTRSFASKVYNHQFKGTLIDLIQWFSYSPYTSSMFKEINTKEMENVFIEAEEPSYLLSLNNDVKKYYPIIKYDQAFYKKDALDKGIIFDHILYKSLIEELYDDDLTLENSESLKNENKLSKKNLSLINSNIISPNQNIFDLLNMIIDYITITNYSLSKIDTLLNPFIEYMSFEPLCASNHNNLFVLSTAHYSINDIDLPVKNHNTNKWPLPSNILDYLVYNISDDKVSFKNPLAYIGMFLQIPYEKFGIDYKNTYIFKVDNYEELNEHEVFDQYMDFFARYEDPAYESLQLKFINLFLENSLDDTNKALCKNYLFSKNFMVPTAYIDCPFPILQHFYLAKNLRQLFFVRSPIRGGYKWAGSYTNNIINNKLYTDLLKIYNRIILLWHKIYTSIIYKFKRNNHGTLAQLVE.

Transmembrane regions (helical) follow at residues 43–63 (FLYI…NQLP), 89–109 (NISL…VYFI), 132–152 (ILFI…LANW), 155–175 (FFII…IKEN), 203–223 (EFFL…TLVS), 247–267 (LFIL…YPFI), and 293–313 (FGML…IEYF).

It belongs to the ycf78 family.

The protein resides in the plastid membrane. This is an uncharacterized protein from Helicosporidium sp. subsp. Simulium jonesii (Green alga).